The chain runs to 133 residues: Ribosome-binding factor A (133 aa).

Belongs to the RbfA family. In terms of assembly, monomer. Binds 30S ribosomal subunits, but not 50S ribosomal subunits or 70S ribosomes.

The protein localises to the cytoplasm. Functionally, one of several proteins that assist in the late maturation steps of the functional core of the 30S ribosomal subunit. Associates with free 30S ribosomal subunits (but not with 30S subunits that are part of 70S ribosomes or polysomes). Required for efficient processing of 16S rRNA. May interact with the 5'-terminal helix region of 16S rRNA. The sequence is that of Ribosome-binding factor A from Pseudomonas fluorescens (strain ATCC BAA-477 / NRRL B-23932 / Pf-5).